Reading from the N-terminus, the 519-residue chain is Glycogen synthase (519 aa).

The tract at residues 1–40 (MISAAVEPHVDAFKPDNREPLTPDFATTGKAPGAQRQHNP) is disordered. A compositionally biased stretch (basic and acidic residues) spans 8-21 (PHVDAFKPDNREPL). Lysine 57 contributes to the ADP-alpha-D-glucose binding site.

The protein belongs to the glycosyltransferase 1 family. Bacterial/plant glycogen synthase subfamily.

The catalysed reaction is [(1-&gt;4)-alpha-D-glucosyl](n) + ADP-alpha-D-glucose = [(1-&gt;4)-alpha-D-glucosyl](n+1) + ADP + H(+). It functions in the pathway glycan biosynthesis; glycogen biosynthesis. In terms of biological role, synthesizes alpha-1,4-glucan chains using ADP-glucose. This Pseudomonas putida (strain ATCC 47054 / DSM 6125 / CFBP 8728 / NCIMB 11950 / KT2440) protein is Glycogen synthase.